The following is a 79-amino-acid chain: Cytochrome c oxidase assembly factor 6 homolog (79 aa).

Residues 9-52 (RQACWGARDEYWKCLDENTEDASKCKKLRSSFESSCPQQWIKYF) form the CHCH domain. The Cx9C motif motif lies at 12-22 (CWGARDEYWKC). 2 disulfides stabilise this stretch: Cys12-Cys44 and Cys22-Cys33. Positions 33 to 44 (CKKLRSSFESSC) match the Cx10C motif motif.

This sequence belongs to the cytochrome c oxidase subunit 6B family. In terms of assembly, found in a complex with TMEM177, COX20, MT-CO2/COX2, COX18, SCO1 and SCO2. Interacts with COA1, MT-CO2/COX2, SCO1, SCO2 and COX20. Interacts with COX20 in a MT-CO2/COX2- and COX18-dependent manner. Interacts with COX16.

The protein localises to the mitochondrion intermembrane space. In terms of biological role, involved in the maturation of the mitochondrial respiratory chain complex IV subunit MT-CO2/COX2. Thereby, may regulate early steps of complex IV assembly. Mitochondrial respiratory chain complex IV or cytochrome c oxidase is the component of the respiratory chain that catalyzes the transfer of electrons from intermembrane space cytochrome c to molecular oxygen in the matrix and as a consequence contributes to the proton gradient involved in mitochondrial ATP synthesis. May also be required for efficient formation of respiratory supercomplexes comprised of complexes III and IV. This chain is Cytochrome c oxidase assembly factor 6 homolog (COA6), found in Bos taurus (Bovine).